The following is a 1888-amino-acid chain: Protein mms22 (1888 aa).

Disordered regions lie at residues 12-34 (DSQD…RGNE), 151-258 (FSSD…ISSN), and 316-354 (RRKL…SRFD). Polar residues-rich tracts occupy residues 13–32 (SQDS…SQRG), 212–227 (SNLN…SSTI), and 338–348 (SDNSISTPTPT).

Belongs to the MMS22 family.

It is found in the nucleus. Its function is as follows. Involved in protection against replication-dependent DNA damage. May act by restoring active replication forks, repairing unusual DNA structures, and/or preventing aberrant DNA rearrangement at arrested replication forks. The protein is Protein mms22 (mus7) of Schizosaccharomyces pombe (strain 972 / ATCC 24843) (Fission yeast).